A 357-amino-acid chain; its full sequence is Dynein axonemal assembly factor 10 (357 aa).

6 WD repeats span residues 63–105 (EKAK…VPVY), 115–154 (NTID…DPVA), 162–205 (ENKR…LRWE), 207–249 (NIKN…PTKG), 257–297 (AHKS…QRSK), and 319–357 (LSTQ…LHKI).

As to quaternary structure, component of the PAQosome complex which is responsible for the biogenesis of several protein complexes and which consists of R2TP complex members RUVBL1, RUVBL2, RPAP3 and PIH1D1, URI complex members PFDN2, PFDN6, PDRG1, UXT and URI1 as well as ASDURF, POLR2E and DNAAF10/WDR92. Interacts with PIH1D1; the interaction associates DNAAF10 with the R2TP complex. Interacts with several dynein axonemal assembly factors.

The protein resides in the dynein axonemal particle. Its function is as follows. Key assembly factor specifically required for the stability of axonemal dynein heavy chains in cytoplasm. In Bos taurus (Bovine), this protein is Dynein axonemal assembly factor 10 (DNAAF10).